Here is a 532-residue protein sequence, read N- to C-terminus: KICSTOR complex protein ITFG2 (532 aa).

Residues Phe19–Tyr48 form an FG-GAP 1; atypical repeat. Ser104 is modified (phosphoserine). Residues Asn126 to Phe155 form an FG-GAP 2; atypical repeat. The disordered stretch occupies residues Pro248 to Ser271.

Part of the KICSTOR complex composed of KPTN, ITFG2, KICS2 and SZT2. SZT2 probably serves as a link between the other three proteins in the KICSTOR complex and may mediate the direct interaction with the GATOR complex via GATOR1. The KICSTOR complex interacts directly with the GATOR1 complex and most probably indirectly with the GATOR2 complex in an amino acid-independent manner.

The protein localises to the lysosome membrane. In terms of biological role, as part of the KICSTOR complex functions in the amino acid-sensing branch of the TORC1 signaling pathway. Recruits, in an amino acid-independent manner, the GATOR1 complex to the lysosomal membranes and allows its interaction with GATOR2 and the RAG GTPases. Functions upstream of the RAG GTPases and is required to negatively regulate mTORC1 signaling in absence of amino acids. In absence of the KICSTOR complex mTORC1 is constitutively localized to the lysosome and activated. The KICSTOR complex is also probably involved in the regulation of mTORC1 by glucose. This chain is KICSTOR complex protein ITFG2, found in Bos taurus (Bovine).